The primary structure comprises 707 residues: Serine/threonine protein kinase UL97 (707 aa).

Positions 1–14 (MSSALRSRARSASL) are enriched in low complexity. 4 disordered regions span residues 1–33 (MSSA…SRAR), 113–146 (DGEK…GDGY), 176–198 (FTGG…RPLR), and 231–264 (ESQD…EADS). Over residues 113-127 (DGEKEDAASDKENLR) the composition is skewed to basic and acidic residues. A compositionally biased stretch (low complexity) spans 178 to 188 (GGSDPSDSVSG). Residues 337 to 345 (LGQGSFGEV) and Lys-359 each bind ATP. Asp-456 functions as the Proton acceptor in the catalytic mechanism.

This sequence belongs to the protein kinase superfamily. Tyr protein kinase family. HCMV ganciclovir subfamily. As to quaternary structure, interacts with UL83. Autophosphorylates on serine and threonine residues.

The protein localises to the virion. It catalyses the reaction L-seryl-[protein] + ATP = O-phospho-L-seryl-[protein] + ADP + H(+). The catalysed reaction is L-threonyl-[protein] + ATP = O-phospho-L-threonyl-[protein] + ADP + H(+). In terms of biological role, serine/threonine protein kinase that plays important roles in several processes including nuclear viral egress, viral replication or regulation of host cell cycle progression. Participates in the acquisition of tegument during virion morphogenesis in the nucleus. Phosphorylates the viral nuclear egress complex (NEC) subunits UL50 and UL53. Redistributes the host nuclear lamina by phosphorylating cellular Lamins-A/C. Plays a role in viral DNA synthesis by phosphorylating the DNA polymerase processivity factor UL44. Stimulates host cell cycle to support viral DNA synthesis by phosphorylating host retinoblastoma/RB1 protein. Additional substrates have been identified including host EF1D or H2B. Also phosphorylates host SAMHD1 and thereby counteracts its antiviral effect by reducing its dNTP hydrolase activity. The protein is Serine/threonine protein kinase UL97 (UL97) of Human cytomegalovirus (strain AD169) (HHV-5).